Reading from the N-terminus, the 510-residue chain is RanBP-type and C3HC4-type zinc finger-containing protein 1 (510 aa).

Methionine 1 is modified (N-acetylmethionine). An interaction with IRF3 region spans residues 1 to 220; sequence MDEKTKKAEE…PGCEMCCRAR (220 aa). An interaction with TAB2 region spans residues 1-270; the sequence is MDEKTKKAEE…NYLQHVQLDQ (270 aa). A Phosphoserine modification is found at serine 50. One can recognise a Ubiquitin-like domain in the interval 55 to 119; the sequence is IRLWVSVEDA…DQETLHSHGV (65 aa). Positions 69 to 131 are interaction with RNF31; that stretch reads VTIWLTVRPD…NGDSAYLYLL (63 aa). Positions 160–192 are disordered; that stretch reads LTLQPRGPLEPGPPKPGVPQEPGRGQPDAVPEP. Over residues 167-178 the composition is skewed to pro residues; sequence PLEPGPPKPGVP. The RanBP2-type zinc-finger motif lies at 193-222; the sequence is PPVGWQCPGCTFINKPTRPGCEMCCRARPE. Residues 233 to 261 are a coiled coil; the sequence is DEEERARLAGEEEALRQYQQRKQQQQEGN. The segment at 278-506 is TRIAD supradomain; it reads EPAECPVCYS…VNGIPCHPSC (229 aa). Zn(2+) is bound by residues cysteine 282, cysteine 285, cysteine 300, histidine 302, cysteine 305, cysteine 308, and cysteine 323. Residues 282–332 form an RING-type 1 zinc finger; the sequence is CPVCYSVLAPGEAVVLRECLHTFCRECLQGTIRNSQEAEVSCPFIDNTYSC. Tyrosine 330 is subject to Phosphotyrosine. Zn(2+) contacts are provided by cysteine 332, cysteine 371, cysteine 376, cysteine 391, cysteine 394, cysteine 399, cysteine 402, histidine 406, cysteine 411, cysteine 447, and cysteine 450. An IBR-type zinc finger spans residues 351–411; sequence QRFLDLGISI…CKAIHEQMNC (61 aa). The RING-type 2; atypical zinc finger occupies 447-476; the sequence is CPQCQIVVQKKDGCDWIRCTVCHTEICWVT. Cysteine 460 is a catalytic residue. Zn(2+)-binding residues include cysteine 465 and cysteine 468.

It belongs to the RBR family. In terms of assembly, component of the LUBAC complex (linear ubiquitin chain assembly complex) which consists of SHARPIN, RBCK1 and RNF31. LUBAC has a MW of approximately 600 kDa suggesting a heteromultimeric assembly of its subunits. Interacts with beta-I-type (PRKCB1) and zeta-type protein kinase C (PRKCZ). Interacts with UBE2L3. Interacts with PRKCH. Associates with the TNF-R1 signaling complex (TNF-RSC) in a stimulation-dependent manner. Interacts with EYA1, TAB2, TAB3, MAP3K7 TRAF6 and RIPK1. Interacts with IRF3. Interacts with IREB2 only in iron-rich conditions. As to quaternary structure, (Microbial infection) Interacts with hepatitis B virus/HBV protein HBx; this interaction is required to activate transcription of the viral genome. Post-translationally, auto-ubiquitinated. Auto-ubiquitination leads to degradation by the proteasome. In terms of processing, phosphorylated. In vitro, phosphorylation inhibits auto-ubiquitination activity. (Microbial infection) Ubiquitinated by S.flexneri E3 ubiquitin-protein ligases IpaH1.4 and IpaH2.5, leading to its degradation by the proteasome, thereby preventing formation of the bacterial ubiquitin coat and activation of innate immunity.

It carries out the reaction [E2 ubiquitin-conjugating enzyme]-S-ubiquitinyl-L-cysteine + [acceptor protein]-L-lysine = [E2 ubiquitin-conjugating enzyme]-L-cysteine + [acceptor protein]-N(6)-ubiquitinyl-L-lysine.. It participates in protein modification; protein ubiquitination. E3 ubiquitin-protein ligase, which accepts ubiquitin from specific E2 ubiquitin-conjugating enzymes, such as UBE2L3/UBCM4, and then transfers it to substrates. Functions as an E3 ligase for oxidized IREB2 and both heme and oxygen are necessary for IREB2 ubiquitination. Promotes ubiquitination of TAB2 and IRF3 and their degradation by the proteasome. Component of the LUBAC complex which conjugates linear ('Met-1'-linked) polyubiquitin chains to substrates and plays a key role in NF-kappa-B activation and regulation of inflammation. LUBAC conjugates linear polyubiquitin to IKBKG and RIPK1 and is involved in activation of the canonical NF-kappa-B and the JNK signaling pathways. Linear ubiquitination mediated by the LUBAC complex interferes with TNF-induced cell death and thereby prevents inflammation. LUBAC is recruited to the TNF-R1 signaling complex (TNF-RSC) following polyubiquitination of TNF-RSC components by BIRC2 and/or BIRC3 and to conjugate linear polyubiquitin to IKBKG and possibly other components contributing to the stability of the complex. The LUBAC complex is also involved in innate immunity by conjugating linear polyubiquitin chains at the surface of bacteria invading the cytosol to form the ubiquitin coat surrounding bacteria. LUBAC is not able to initiate formation of the bacterial ubiquitin coat, and can only promote formation of linear polyubiquitins on pre-existing ubiquitin. The bacterial ubiquitin coat acts as an 'eat-me' signal for xenophagy and promotes NF-kappa-B activation. Together with OTULIN, the LUBAC complex regulates the canonical Wnt signaling during angiogenesis. Binds polyubiquitin of different linkage types. The polypeptide is RanBP-type and C3HC4-type zinc finger-containing protein 1 (RBCK1) (Homo sapiens (Human)).